The chain runs to 109 residues: uncharacterized protein (109 aa).

It belongs to the archaeal ATPase family.

This is an uncharacterized protein from Methanocaldococcus jannaschii (strain ATCC 43067 / DSM 2661 / JAL-1 / JCM 10045 / NBRC 100440) (Methanococcus jannaschii).